The following is a 306-amino-acid chain: Pantothenate kinase (306 aa).

91 to 98 is an ATP binding site; that stretch reads GSVAVGKS.

This sequence belongs to the prokaryotic pantothenate kinase family.

It is found in the cytoplasm. It catalyses the reaction (R)-pantothenate + ATP = (R)-4'-phosphopantothenate + ADP + H(+). It participates in cofactor biosynthesis; coenzyme A biosynthesis; CoA from (R)-pantothenate: step 1/5. This chain is Pantothenate kinase (coaA), found in Streptococcus pneumoniae serotype 4 (strain ATCC BAA-334 / TIGR4).